An 820-amino-acid chain; its full sequence is Probable protease Ga0182885_104520 (820 aa).

The protein belongs to the peptidase C25 family.

Probably a dedicated protease for substrate gasdermin bGSDM; cleaves the bGSDM precursor, releasing the pore-forming moiety, which integrates into the membrane and triggers cell death. Involved in defense against bacteriophages. Expression of bacterial gasdermin (bGSDM) and this neighboring protease is toxic in E.coli. The polypeptide is Probable protease Ga0182885_104520 (Desulfuromonadales bacterium).